The following is a 289-amino-acid chain: 2,3-dimethylmalate lyase (289 aa).

The protein belongs to the isocitrate lyase/PEP mutase superfamily. In terms of assembly, homotetramer. Mg(2+) is required as a cofactor.

It carries out the reaction (2R,3S)-2,3-dimethylmalate = propanoate + pyruvate. The protein operates within cofactor degradation; nicotinate degradation; propanoate and pyruvate from 6-hydroxynicotinate: step 8/8. With respect to regulation, completely inhibited by propionic anhydride and by cystamine. Irreversibly inhibited by the mercapto reagents iodoacetate and iodoacetamide. Unaffected by hydroxylamine. In terms of biological role, catalyzes the formation of proponate and pyruvate from (2R,3S)-2,3-dimethylmalate. Has no activity toward dimethylmaleate, malate, citramalate, isocitrate and citrate. This chain is 2,3-dimethylmalate lyase, found in Eubacterium barkeri (Clostridium barkeri).